The primary structure comprises 348 residues: Trace amine-associated receptor 9 (348 aa).

The Extracellular segment spans residues 1-33; sequence MVNNFSQAEAVELCYKNVNESCIKTPYSPGPRS. Residues Asn4 and Asn19 are each glycosylated (N-linked (GlcNAc...) asparagine). 2 disulfides stabilise this stretch: Cys22-Cys186 and Cys105-Cys190. A helical transmembrane segment spans residues 34–58; sequence ILYAVLGFGAVLAAFGNLLVMIAIL. The Cytoplasmic segment spans residues 59–68; sequence HFKQLHTPTN. The helical transmembrane segment at 69 to 90 threads the bilayer; sequence FLIASLACADFLVGVTVMPFST. At 91–105 the chain is on the extracellular side; that stretch reads VRSVESCWYFGDSYC. Residues 106–128 traverse the membrane as a helical segment; it reads KFHTCFDTSFCFASLFHLCCISV. Residues Asp112 and Thr113 each contribute to the spermidine site. The Cytoplasmic portion of the chain corresponds to 129–148; sequence DRYIAVTDPLTYPTKFTVSV. A helical transmembrane segment spans residues 149–170; that stretch reads SGICIVLSWFFSVTYSFSIFYT. At 171–196 the chain is on the extracellular side; it reads GANEEGIEELVVALTCVGGCQAPLNQ. The interval 174-187 is extracellular Loop 2 (ECL2); it reads EEGIEELVVALTCV. The helical transmembrane segment at 197-218 threads the bilayer; the sequence is NWVLLCFLLFFIPNVAMVFIYS. At 219 to 256 the chain is on the cytoplasmic side; sequence KIFLVAKHQARKIESTASQAQSSSESYKERVAKRERKA. A helical transmembrane segment spans residues 257–280; it reads AKTLGIAMAAFLVSWLPYLVDAVI. Residues 281 to 293 are Extracellular-facing; the sequence is DAYMNFITPPYVY. A helical membrane pass occupies residues 294-314; that stretch reads EILVWCVYYNSAMNPLIYAFF. At 315 to 348 the chain is on the cytoplasmic side; that stretch reads YQWFGKAIKLIVSGKVLRTDSSTTNLFSEEVETD.

Belongs to the G-protein coupled receptor 1 family.

The protein localises to the cell membrane. In terms of biological role, olfactory receptor specific for trace amines, such as N,N-dimethylcyclohexylamine (DMCHA) and beta-phenylethylamine (beta-PEA). In contrast to mouse and rat orthologs, not activated by triethylamine, cadaverine (CAD) or spermidine. Trace amine compounds are enriched in animal body fluids and act on trace amine-associated receptors (TAARs) to elicit both intraspecific and interspecific innate behaviors. Trace amine-binding causes a conformation change that triggers signaling via G(s)-class of G alpha proteins (GNAL or GNAS). In mature olfactory sensory neurons, TAAR9 is coupled with GNAL/G(olf)G alpha protein and mediates activation of adenylate cyclase activity to activate cAMP signaling and eventually transmit odorant signals to achieve membrane depolarization. In immature olfactory sensory neurons, TAAR9 is coupled with GNAS/G(s) G alpha proteins. The protein is Trace amine-associated receptor 9 of Homo sapiens (Human).